Consider the following 207-residue polypeptide: Arginine exporter protein ArgO (207 aa).

The next 6 helical transmembrane spans lie at 1 to 21 (MLST…PLGP), 42 to 62 (LCAI…SALL), 67 to 87 (LLLQ…GWGA), 111 to 131 (VVAI…DTIV), 150 to 170 (FGAA…AAWF), and 185 to 205 (GFIC…GLLI).

The protein belongs to the LysE/ArgO transporter (TC 2.A.75) family.

The protein localises to the cell inner membrane. It carries out the reaction L-arginine(in) = L-arginine(out). Involved in the export of arginine. Important to control the intracellular level of arginine and the correct balance between arginine and lysine. The protein is Arginine exporter protein ArgO of Photorhabdus laumondii subsp. laumondii (strain DSM 15139 / CIP 105565 / TT01) (Photorhabdus luminescens subsp. laumondii).